Consider the following 479-residue polypeptide: ATP synthase subunit beta (479 aa).

Residue 153-160 (GGAGVGKT) coordinates ATP.

It belongs to the ATPase alpha/beta chains family. F-type ATPases have 2 components, CF(1) - the catalytic core - and CF(0) - the membrane proton channel. CF(1) has five subunits: alpha(3), beta(3), gamma(1), delta(1), epsilon(1). CF(0) has three main subunits: a(1), b(2) and c(9-12). The alpha and beta chains form an alternating ring which encloses part of the gamma chain. CF(1) is attached to CF(0) by a central stalk formed by the gamma and epsilon chains, while a peripheral stalk is formed by the delta and b chains.

It localises to the cell membrane. The catalysed reaction is ATP + H2O + 4 H(+)(in) = ADP + phosphate + 5 H(+)(out). Its function is as follows. Produces ATP from ADP in the presence of a proton gradient across the membrane. The catalytic sites are hosted primarily by the beta subunits. This Lactobacillus helveticus (strain DPC 4571) protein is ATP synthase subunit beta.